Here is a 191-residue protein sequence, read N- to C-terminus: Cell division protein SepF (191 aa).

Positions Thr150 to Thr164 are enriched in low complexity. Residues Thr150–Ser191 are disordered. Over residues Glu165–Pro178 the composition is skewed to polar residues.

The protein belongs to the SepF family. Homodimer. Interacts with FtsZ.

The protein resides in the cytoplasm. In terms of biological role, cell division protein that is part of the divisome complex and is recruited early to the Z-ring. Probably stimulates Z-ring formation, perhaps through the cross-linking of FtsZ protofilaments. Its function overlaps with FtsA. This Prochlorococcus marinus (strain AS9601) protein is Cell division protein SepF.